A 3590-amino-acid polypeptide reads, in one-letter code: Filamentous hemagglutinin (3590 aa).

Disordered regions lie at residues 3256–3309 (GGGS…VEVS) and 3417–3498 (APPP…GRHV). Residues 3289–3299 (PSRPTTPPASP) show a composition bias toward pro residues. Over residues 3300–3309 (QPIRATVEVS) the composition is skewed to low complexity. A compositionally biased stretch (pro residues) spans 3417–3432 (APPPVVETAQPLPPVK).

The protein localises to the cell surface. Its function is as follows. Evidence for a role in host-cell binding and infection. This chain is Filamentous hemagglutinin (fhaB), found in Bordetella pertussis (strain Tohama I / ATCC BAA-589 / NCTC 13251).